The following is a 273-amino-acid chain: Large ribosomal subunit protein uL2 (273 aa).

The tract at residues 221 to 263 (RGTAMNPVDHPHGGGEGRNFGKHPVSPWGLKTKGKKTRRNKRT) is disordered. Residues 252-263 (TKGKKTRRNKRT) show a composition bias toward basic residues.

It belongs to the universal ribosomal protein uL2 family. In terms of assembly, part of the 50S ribosomal subunit. Forms a bridge to the 30S subunit in the 70S ribosome.

Its function is as follows. One of the primary rRNA binding proteins. Required for association of the 30S and 50S subunits to form the 70S ribosome, for tRNA binding and peptide bond formation. It has been suggested to have peptidyltransferase activity; this is somewhat controversial. Makes several contacts with the 16S rRNA in the 70S ribosome. The protein is Large ribosomal subunit protein uL2 of Buchnera aphidicola subsp. Cinara cedri (strain Cc).